Here is a 244-residue protein sequence, read N- to C-terminus: Tyrosine recombinase XerD-like (244 aa).

One can recognise a Core-binding (CB) domain in the interval 1 to 73 (MRDRISAFLE…ACNQFLYFLY (73 aa)). One can recognise a Tyr recombinase domain in the interval 90 to 244 (AEKKTEKPEI…KTVLTLEKYR (155 aa)). Catalysis depends on residues Lys-150 and Arg-211. Tyr-243 serves as the catalytic O-(3'-phospho-DNA)-tyrosine intermediate.

Belongs to the 'phage' integrase family. XerD-like subfamily.

The protein resides in the cytoplasm. In terms of biological role, putative tyrosine recombinase. Not involved in the cutting and rejoining of the recombining DNA molecules on dif(SL) site. This chain is Tyrosine recombinase XerD-like, found in Streptococcus pneumoniae serotype 2 (strain D39 / NCTC 7466).